Consider the following 155-residue polypeptide: Small ribosomal subunit protein uS7 (155 aa).

The protein belongs to the universal ribosomal protein uS7 family. As to quaternary structure, part of the 30S ribosomal subunit. Contacts proteins S9 and S11.

Its function is as follows. One of the primary rRNA binding proteins, it binds directly to 16S rRNA where it nucleates assembly of the head domain of the 30S subunit. Is located at the subunit interface close to the decoding center, probably blocks exit of the E-site tRNA. This Mycoplasma capricolum subsp. capricolum (strain California kid / ATCC 27343 / NCTC 10154) protein is Small ribosomal subunit protein uS7.